Reading from the N-terminus, the 264-residue chain is Probable membrane transporter protein HI_0902 (264 aa).

Helical transmembrane passes span 4–24 (FILL…LFGI), 28–48 (LVIV…ESLL), 49–69 (MSTA…GSAQ), 81–101 (AVRI…LFIG), 107–127 (ISAK…VLSI), 147–167 (ILIG…IVPF), 183–203 (AFCG…SGWG), 210–230 (YSLG…SFFT), and 243–263 (VSTL…NMFL).

This sequence belongs to the 4-toluene sulfonate uptake permease (TSUP) (TC 2.A.102) family.

It localises to the cell membrane. In Haemophilus influenzae (strain ATCC 51907 / DSM 11121 / KW20 / Rd), this protein is Probable membrane transporter protein HI_0902.